The following is a 689-amino-acid chain: Beta-adrenergic receptor kinase 1 (689 aa).

The tract at residues 1-190 (MADLEAVLAD…ELNIHLTMND (190 aa)) is N-terminal. Positions 54-175 (TFEKIFSQKL…IESDKFTRFC (122 aa)) constitute an RGS domain. The Protein kinase domain occupies 191-453 (FSVHRIIGRG…AQEVKESPFF (263 aa)). ATP-binding positions include 197–205 (IGRGGFGEV) and lysine 220. Aspartate 317 serves as the catalytic Proton acceptor. One can recognise an AGC-kinase C-terminal domain in the interval 454 to 521 (RSLDWQMVFL…TISERWQQEV (68 aa)). The PH domain maps to 558–652 (DCIVHGYMSK…WKKELRDAYR (95 aa)). Residue serine 670 is modified to Phosphoserine.

Belongs to the protein kinase superfamily. AGC Ser/Thr protein kinase family. GPRK subfamily. As to quaternary structure, interacts with the heterodimer formed by GNB1 and GNG2. Interacts with GIT1. Interacts with, and phosphorylates chemokine-stimulated CCR5. Interacts with ARRB1. Interacts with LPAR1 and LPAR2. Interacts with RALA in response to LPAR1 activation. ADRBK1 and RALA mutually inhibit each other's binding to LPAR1. Interacts with ADRB2.

It is found in the cytoplasm. It localises to the cell membrane. The protein localises to the postsynapse. Its subcellular location is the presynapse. It carries out the reaction [beta-adrenergic receptor] + ATP = [beta-adrenergic receptor]-phosphate + ADP + H(+). In contrast to other AGC family kinases, the catalytic activity is solely regulated by the binding of substrates and ligands, not by phosphorylation of the kinase domain. In terms of biological role, specifically phosphorylates the agonist-occupied form of the beta-adrenergic and closely related receptors, probably inducing a desensitization of them. Key regulator of LPAR1 signaling. Competes with RALA for binding to LPAR1 thus affecting the signaling properties of the receptor. Desensitizes LPAR1 and LPAR2 in a phosphorylation-independent manner. Positively regulates ciliary smoothened (SMO)-dependent Hedgehog (Hh) signaling pathway by facilitating the trafficking of SMO into the cilium and the stimulation of SMO activity. Inhibits relaxation of airway smooth muscle in response to blue light. This Mus musculus (Mouse) protein is Beta-adrenergic receptor kinase 1.